Consider the following 154-residue polypeptide: MADSSGRVGKSGGSGTGKGAVSAEQVIAGFNRLRQEQRGLASKAAELEMELNEHSLVIDTLKEVDETRKCYRMVGGVLVERTVKEVLPALEGNKEQIQKIIETLSQQLQAKGKELNEFREKHNIRLMGEDEKPAAKENSEGAGAKSSSAGVLVS.

2 disordered regions span residues 1 to 20 and 126 to 154; these read MADSSGRVGKSGGSGTGKGA and LMGEDEKPAAKENSEGAGAKSSSAGVLVS. Gly residues predominate over residues 9-18; the sequence is GKSGGSGTGK. Over residues 126–139 the composition is skewed to basic and acidic residues; it reads LMGEDEKPAAKENS. Positions 141–154 are enriched in low complexity; it reads GAGAKSSSAGVLVS.

This sequence belongs to the prefoldin subunit beta family. In terms of assembly, heterohexamer of two PFD-alpha type and four PFD-beta type subunits. Component of the PAQosome complex which is responsible for the biogenesis of several protein complexes and which consists of R2TP complex members RUVBL1, RUVBL2, RPAP3 and PIH1D1, URI complex members PFDN2, PFDN6, PDRG1, UXT and URI1 as well as ASDURF, POLR2E and DNAAF10/WDR92. Interacts with URI1; the interaction is phosphorylation-dependent and occurs in a growth-dependent manner.

The protein resides in the nucleus. It localises to the cytoplasm. The protein localises to the mitochondrion. Its function is as follows. Binds specifically to cytosolic chaperonin (c-CPN) and transfers target proteins to it. Binds to nascent polypeptide chain and promotes folding in an environment in which there are many competing pathways for nonnative proteins. The sequence is that of Prefoldin subunit 2 (Pfdn2) from Rattus norvegicus (Rat).